The sequence spans 145 residues: MAEVEQKKKRTFRKFTYRGVDLDQLLDMSYEQLMQLYSARQRRRLNRGLRRKQHSLLKRLRKAKKEAPPMEKPEVVKTHLRDMIILPEMVGSMVGVYNGKTFNQVEIKPEMIGHYLGEFSITYKPVKHGRPGIGATHSSRFIPLK.

Alanine 2 is modified (N-acetylalanine). Lysine 108 participates in a covalent cross-link: Glycyl lysine isopeptide (Lys-Gly) (interchain with G-Cter in SUMO2).

The protein belongs to the universal ribosomal protein uS19 family. Component of the small ribosomal subunit.

The protein localises to the cytoplasm. Component of the small ribosomal subunit. The ribosome is a large ribonucleoprotein complex responsible for the synthesis of proteins in the cell. The sequence is that of Small ribosomal subunit protein uS19 (RPS15) from Mesocricetus auratus (Golden hamster).